Reading from the N-terminus, the 266-residue chain is Basic endochitinase C (266 aa).

The first 23 residues, 1–23 (MRSLAVVVAVVATVAMAIGTAHG), serve as a signal peptide directing secretion. 3 disulfides stabilise this stretch: cysteine 46/cysteine 108, cysteine 120/cysteine 128, and cysteine 246/cysteine 259. Residue glutamate 90 is the Proton donor of the active site.

Belongs to the glycosyl hydrolase 19 family. Chitinase class II subfamily. As to expression, localized to the starchy endoderm of the seed May localize to other parts of the seed including the aleurone cells (at protein level).

It catalyses the reaction Random endo-hydrolysis of N-acetyl-beta-D-glucosaminide (1-&gt;4)-beta-linkages in chitin and chitodextrins.. In terms of biological role, defense against chitin-containing fungal pathogens. Binds the hyphal tips of fungi and degrades nascent chitin. The polypeptide is Basic endochitinase C (Secale cereale (Rye)).